A 434-amino-acid polypeptide reads, in one-letter code: Glutamyl-tRNA reductase (434 aa).

Residues 49-52 (TCNR), Ser109, 114-116 (EPQ), and Gln120 contribute to the substrate site. Residue Cys50 is the Nucleophile of the active site. 189–194 (GAGEMA) is an NADP(+) binding site.

Belongs to the glutamyl-tRNA reductase family. As to quaternary structure, homodimer.

The enzyme catalyses (S)-4-amino-5-oxopentanoate + tRNA(Glu) + NADP(+) = L-glutamyl-tRNA(Glu) + NADPH + H(+). The protein operates within porphyrin-containing compound metabolism; protoporphyrin-IX biosynthesis; 5-aminolevulinate from L-glutamyl-tRNA(Glu): step 1/2. Catalyzes the NADPH-dependent reduction of glutamyl-tRNA(Glu) to glutamate 1-semialdehyde (GSA). This is Glutamyl-tRNA reductase from Desulfatibacillum aliphaticivorans.